We begin with the raw amino-acid sequence, 479 residues long: Pre-glycoprotein polyprotein GP complex (479 aa).

Residue glycine 2 is the site of N-myristoyl glycine; by host attachment. At glycine 2–glutamate 17 the chain is on the extracellular side. The helical transmembrane segment at alanine 18–isoleucine 32 threads the bilayer. A topological domain (cytoplasmic) is located at residue lysine 33. A helical transmembrane segment spans residues glycine 34 to alanine 53. Extracellular segments lie at residues glycine 54–serine 58 and phenylalanine 59–aspartate 418. Cysteine 57 lines the Zn(2+) pocket. Intrachain disulfides connect cysteine 85–cysteine 221, cysteine 265–cysteine 278, and cysteine 287–cysteine 296. Asparagine 88, asparagine 125, asparagine 174, asparagine 202, and asparagine 214 each carry an N-linked (GlcNAc...) asparagine; by host glycan. N-linked (GlcNAc...) asparagine; by host glycans are attached at residues asparagine 314, asparagine 351, asparagine 359, asparagine 376, and asparagine 381. Cysteine 350 and cysteine 371 are disulfide-bonded. Residues leucine 419–proline 439 traverse the membrane as a helical segment. Topologically, residues threonine 440 to histidine 479 are cytoplasmic. Zn(2+)-binding residues include histidine 441, histidine 443, cysteine 449, histidine 453, cysteine 461, cysteine 463, and histidine 479.

Belongs to the arenaviridae GPC protein family. Homotetramer; disulfide-linked. As to quaternary structure, homotetramer. GP2 homotetramers bind through ionic interactions with GP1 homotetramers to form the GP complex together with the stable signal peptide. The GP-C polyprotein interacts with the host protease MBTPS1/SKI-1 resulting in the polyprotein processing. Post-translationally, specific enzymatic cleavages in vivo yield mature proteins. GP-C polyprotein is cleaved in the endoplasmic reticulum by the host protease MBTPS1. Only cleaved glycoprotein is incorporated into virions. In terms of processing, the SSP remains stably associated with the GP complex following cleavage by signal peptidase and plays crucial roles in the trafficking of GP through the secretory pathway. Myristoylation is necessary for GP2-mediated fusion activity.

The protein localises to the virion membrane. It localises to the host endoplasmic reticulum membrane. The protein resides in the host Golgi apparatus membrane. It is found in the host cell membrane. In terms of biological role, interacts with the host receptor. Mediates virus attachment to host TFRC. This attachment induces virion internalization predominantly through clathrin-mediated endocytosis. Class I viral fusion protein that directs fusion of viral and host endosomal membranes, leading to delivery of the nucleocapsid into the cytoplasm. Membrane fusion is mediated by irreversible conformational changes induced upon acidification in the endosome. Its function is as follows. Stable signal peptide (SSP): cleaved and functions as a signal peptide. In addition, it is also retained as the third component of the GP complex. The SSP is required for efficient glycoprotein expression, post-translational maturation cleavage of GP1 and GP2, glycoprotein transport to the cell surface plasma membrane, formation of infectious virus particles, and acid pH-dependent glycoprotein-mediated cell fusion. The protein is Pre-glycoprotein polyprotein GP complex of Homo sapiens (Human).